A 143-amino-acid polypeptide reads, in one-letter code: Putative complexin-1 (143 aa).

A disordered region spans residues 16 to 72; sequence EVTGGLGMKDDGGEKTETGEDPEVIAARLEQEERRKEKHRKMENEREKMRQGIRDKY. Basic and acidic residues-rich tracts occupy residues 23 to 33 and 44 to 72; these read MKDDGGEKTET and LEQE…RDKY. Residues 40–71 are a coiled coil; the sequence is IAARLEQEERRKEKHRKMENEREKMRQGIRDK.

The protein belongs to the complexin/synaphin family.

Its subcellular location is the cytoplasm. It localises to the cytosol. Functionally, positively regulates a late step in synaptic vesicle exocytosis. This is Putative complexin-1 (cpx-1) from Caenorhabditis elegans.